The following is a 997-amino-acid chain: Sarcoplasmic/endoplasmic reticulum calcium ATPase 2 (997 aa).

The Cytoplasmic segment spans residues 1–48 (MENAHTKTVEEVLGYFGVNESTGLSLEQVKKLKERWGSNELPAEEGKT). S38 carries the post-translational modification Phosphoserine. A helical transmembrane segment spans residues 49–69 (LLELVIEQFEDLLVRILLLAA). Topologically, residues 70–89 (CISFVLAWFEEGEETITAFV) are lumenal. A helical membrane pass occupies residues 90–110 (EPFVILLILVANAIVGVWQER). Topologically, residues 111–253 (NAENAIEALK…QERTPLQQKL (143 aa)) are cytoplasmic. Residues 254-273 (DEFGEQLSKVISLICIAVWI) traverse the membrane as a helical segment. At 274–295 (INIGHFNDPVHGGSWIRGAIYY) the chain is on the lumenal side. 2 positions are modified to 3'-nitrotyrosine: Y294 and Y295. The helical transmembrane segment at 296–313 (FKIAVALAVAAIPEGLPA) threads the bilayer. Positions 304, 305, 307, and 309 each coordinate Ca(2+). The Cytoplasmic portion of the chain corresponds to 314–756 (VITTCLALGT…EEGRAIYNNM (443 aa)). D351 functions as the 4-aspartylphosphate intermediate in the catalytic mechanism. Residues D351 and T353 each contribute to the Mg(2+) site. T353 is an ATP binding site. T441 carries the post-translational modification Phosphothreonine. 3 residues coordinate ATP: E442, R489, and K514. At S531 the chain carries Phosphoserine. R559 is an ATP binding site. The interaction with HAX1 stretch occupies residues 575–594 (MNLEDSANFIKYETNLTFVG). S580 is subject to Phosphoserine. Residues T624, G625, and D626 each contribute to the ATP site. 2 positions are modified to phosphoserine: S661 and S663. 2 residues coordinate ATP: R677 and K683. D702 lines the Mg(2+) pocket. Residue N705 coordinates ATP. The chain crosses the membrane as a helical span at residues 757 to 776 (KQFIRYLISSNVGEVVCIFL). 2 residues coordinate Ca(2+): N767 and E770. At 777–786 (TAALGFPEAL) the chain is on the lumenal side. Residues 787 to 807 (IPVQLLWVNLVTDGLPATALG) traverse the membrane as a helical segment. An interaction with PLN region spans residues 787 to 807 (IPVQLLWVNLVTDGLPATALG). The tract at residues 788 to 997 (PVQLLWVNLV…RNYLEPAILE (210 aa)) is interaction with TMEM64 and PDIA3. The Ca(2+) site is built by N795, T798, and D799. Residues 808–827 (FNPPDLDIMNKPPRNPKEPL) are Cytoplasmic-facing. A helical membrane pass occupies residues 828–850 (ISGWLFFRYLAIGCYVGAATVGA). At 851–896 (AAWWFIAADGGPRVSFYQLSHFLQCKDDNPDFEGVDCAIFESPYPM) the chain is on the lumenal side. Residues C875 and C887 are joined by a disulfide bond. Residues 897–916 (TMALSVLVTIEMCNALNSLS) form a helical membrane-spanning segment. E907 provides a ligand contact to Ca(2+). The Cytoplasmic segment spans residues 917–929 (ENQSLLRMPPWEN). A helical membrane pass occupies residues 930-948 (IWLVGSICLSMSLHFLILY). The segment at 931–942 (WLVGSICLSMSL) is interaction with PLN. Over 949-963 (VEPLPLIFQITPLNL) the chain is Lumenal. The helical transmembrane segment at 964-984 (TQWLMVLKISLPVILMDETLK) threads the bilayer. Over 985-997 (FVARNYLEPAILE) the chain is Cytoplasmic.

This sequence belongs to the cation transport ATPase (P-type) (TC 3.A.3) family. Type IIA subfamily. As to quaternary structure, interacts with sarcolipin (SLN); the interaction inhibits ATP2A2 Ca(2+) affinity. Interacts with phospholamban (PLN); the interaction inhibits ATP2A2 Ca(2+) affinity. Interacts with myoregulin (MRLN). Interacts with ARLN and ERLN; the interactions inhibit ATP2A2 Ca(2+) affinity. Interacts with STRIT1/DWORF; the interaction results in activation of ATP2A2. Interacts with the monomeric forms of SLN, PLN, ARLN, ERLN and STRI1/DWORF. Interacts with HAX1. Interacts with S100A8 and S100A9. Interacts with SLC35G1 and STIM1. Interacts with TMEM203. Interacts with TMEM64 and PDIA3. Interacts with TMX1. Interacts with TMX2. Interacts with VMP1; VMP1 competes with PLN and SLN to prevent them from forming an inhibitory complex with ATP2A2. Interacts with ULK1. Interacts with S100A1 in a Ca(2+)-dependent manner. Interacts with TUNAR. Interacts with FLVCR2; this interaction occurs in the absence of heme and promotes ATP2A2 proteasomal degradation; this complex is dissociated upon heme binding. Interacts with FNIP1. Interacts with TRAM2 (via C-terminus). It depends on Mg(2+) as a cofactor. In terms of processing, nitrated under oxidative stress. Nitration on the two tyrosine residues inhibits catalytic activity. Serotonylated on Gln residues by TGM2 in response to hypoxia, leading to its inactivation. In terms of tissue distribution, isoform 1 is expressed in the heart.

The protein localises to the endoplasmic reticulum membrane. It is found in the sarcoplasmic reticulum membrane. It catalyses the reaction Ca(2+)(in) + ATP + H2O = Ca(2+)(out) + ADP + phosphate + H(+). Its activity is regulated as follows. Has different conformational states with differential Ca2+ affinity. The E1 conformational state (active form) shows high Ca(2+) affinity, while the E2 state exhibits low Ca(2+) affinity. Binding of ATP allosterically increases its affinity for subsequent binding of Ca2+. Reversibly inhibited by phospholamban (PLN) at low calcium concentrations. PLN inhibits ATP2A2 Ca(2+) affinity by disrupting its allosteric activation by ATP. Inhibited by sarcolipin (SLN) and myoregulin (MRLN). The inhibition is blocked by VMP1. Enhanced by STRIT1/DWORF; STRIT1 increases activity by displacing sarcolipin (SLN), phospholamban (PLN) and myoregulin (MRLN). Stabilizes SERCA2 in its E2 state. In terms of biological role, this magnesium-dependent enzyme catalyzes the hydrolysis of ATP coupled with the translocation of calcium from the cytosol to the sarcoplasmic reticulum lumen. Involved in autophagy in response to starvation. Upon interaction with VMP1 and activation, controls ER-isolation membrane contacts for autophagosome formation. Also modulates ER contacts with lipid droplets, mitochondria and endosomes. In coordination with FLVCR2 mediates heme-stimulated switching from mitochondrial ATP synthesis to thermogenesis. Functionally, involved in the regulation of the contraction/relaxation cycle. Acts as a regulator of TNFSF11-mediated Ca(2+) signaling pathways via its interaction with TMEM64 which is critical for the TNFSF11-induced CREB1 activation and mitochondrial ROS generation necessary for proper osteoclast generation. Association between TMEM64 and SERCA2 in the ER leads to cytosolic Ca(2+) spiking for activation of NFATC1 and production of mitochondrial ROS, thereby triggering Ca(2+) signaling cascades that promote osteoclast differentiation and activation. In Felis catus (Cat), this protein is Sarcoplasmic/endoplasmic reticulum calcium ATPase 2 (ATP2A2).